A 455-amino-acid chain; its full sequence is Adenylyltransferase and sulfurtransferase MOCS3 (455 aa).

ATP-binding positions include Gly-90, Asp-111, 118 to 122 (SNLAR), Lys-135, and 179 to 180 (DN). The tract at residues 156-236 (AQALTPATAL…RPPPAETVTS (81 aa)) is interaction with NFS1. Cys-220 and Cys-223 together coordinate Zn(2+). Cys-237 (glycyl thioester intermediate; for adenylyltransferase activity) is an active-site residue. Positions 295 and 298 each coordinate Zn(2+). Cys-314 and Cys-322 form a disulfide bridge. A Rhodanese domain is found at 345 to 453 (SRSPHLLLDV…WAAKIDGTFP (109 aa)). The active-site Cysteine persulfide intermediate; for sulfurtransferase activity is the Cys-410. Cys-410 is subject to Cysteine persulfide.

It in the N-terminal section; belongs to the HesA/MoeB/ThiF family. UBA4 subfamily. As to quaternary structure, interacts with NFS1. It depends on Zn(2+) as a cofactor.

It localises to the cytoplasm. The protein localises to the cytosol. It catalyses the reaction [molybdopterin-synthase sulfur-carrier protein]-C-terminal Gly-Gly + ATP + H(+) = [molybdopterin-synthase sulfur-carrier protein]-C-terminal Gly-Gly-AMP + diphosphate. The catalysed reaction is [molybdopterin-synthase sulfur-carrier protein]-C-terminal Gly-Gly-AMP + S-sulfanyl-L-cysteinyl-[cysteine desulfurase] + AH2 = [molybdopterin-synthase sulfur-carrier protein]-C-terminal-Gly-aminoethanethioate + L-cysteinyl-[cysteine desulfurase] + A + AMP + 2 H(+). Its pathway is tRNA modification; 5-methoxycarbonylmethyl-2-thiouridine-tRNA biosynthesis. It participates in cofactor biosynthesis; molybdopterin biosynthesis. Plays a central role in 2-thiolation of mcm(5)S(2)U at tRNA wobble positions of cytosolic tRNA(Lys), tRNA(Glu) and tRNA(Gln). Also essential during biosynthesis of the molybdenum cofactor. Acts by mediating the C-terminal thiocarboxylation of sulfur carriers URM1 and MOCS2A. Its N-terminus first activates URM1 and MOCS2A as acyl-adenylates (-COAMP), then the persulfide sulfur on the catalytic cysteine is transferred to URM1 and MOCS2A to form thiocarboxylation (-COSH) of their C-terminus. The reaction probably involves hydrogen sulfide that is generated from the persulfide intermediate and that acts as a nucleophile towards URM1 and MOCS2A. Subsequently, a transient disulfide bond is formed. Does not use thiosulfate as sulfur donor; NFS1 acting as a sulfur donor for thiocarboxylation reactions. The sequence is that of Adenylyltransferase and sulfurtransferase MOCS3 from Bos taurus (Bovine).